The following is a 185-amino-acid chain: Ribosome-recycling factor (185 aa).

The protein belongs to the RRF family.

It localises to the cytoplasm. In terms of biological role, responsible for the release of ribosomes from messenger RNA at the termination of protein biosynthesis. May increase the efficiency of translation by recycling ribosomes from one round of translation to another. The polypeptide is Ribosome-recycling factor (Idiomarina loihiensis (strain ATCC BAA-735 / DSM 15497 / L2-TR)).